We begin with the raw amino-acid sequence, 425 residues long: Glutamate-1-semialdehyde 2,1-aminomutase (425 aa).

Lys-265 carries the N6-(pyridoxal phosphate)lysine modification.

Belongs to the class-III pyridoxal-phosphate-dependent aminotransferase family. HemL subfamily. In terms of assembly, homodimer. Pyridoxal 5'-phosphate is required as a cofactor.

The protein resides in the cytoplasm. The catalysed reaction is (S)-4-amino-5-oxopentanoate = 5-aminolevulinate. It participates in porphyrin-containing compound metabolism; protoporphyrin-IX biosynthesis; 5-aminolevulinate from L-glutamyl-tRNA(Glu): step 2/2. The chain is Glutamate-1-semialdehyde 2,1-aminomutase from Laribacter hongkongensis (strain HLHK9).